A 430-amino-acid chain; its full sequence is Probable sulfoacetate transporter SauU (430 aa).

10 helical membrane-spanning segments follow: residues 47-67 (LGLVFSAFAYPYAAMQILGGW), 83-103 (LIWGVATVLTGFAGSVLILVV), 142-162 (FARLGGAITPPVVLVIVAAAG), 165-185 (EAFIVLGAVSLGWTLLYAFFF), 228-248 (WLVTFVDFCYGWSLWVYLTWL), 263-283 (LALFTALPLMAGVVGDTLGGV), 301-321 (AVLFVGLAGSLMFIAPMTFTA), 327-347 (VILLSLSFFFLELTNAVLWSL), 362-382 (MMNTGFGVAGMVSPVVFGYLI), and 390-410 (LPFMISGALLGVGALASLFIN).

The protein belongs to the major facilitator superfamily.

It localises to the cell membrane. In terms of biological role, may transport sulfoacetate into the cell. In Cupriavidus necator (strain ATCC 17699 / DSM 428 / KCTC 22496 / NCIMB 10442 / H16 / Stanier 337) (Ralstonia eutropha), this protein is Probable sulfoacetate transporter SauU (sauU).